The chain runs to 230 residues: Heptaprenylglyceryl phosphate synthase (230 aa).

Position 12 (K12) interacts with sn-glycerol 1-phosphate. Positions 14 and 40 each coordinate Mg(2+). Residues Y159 to G164, G189, and G209 to D210 contribute to the sn-glycerol 1-phosphate site.

It belongs to the GGGP/HepGP synthase family. Group I subfamily. As to quaternary structure, homodimer. It depends on Mg(2+) as a cofactor.

The enzyme catalyses sn-glycerol 1-phosphate + all-trans-heptaprenyl diphosphate = 3-heptaprenyl-sn-glycero-1-phosphate + diphosphate. The protein operates within membrane lipid metabolism; glycerophospholipid metabolism. In terms of biological role, prenyltransferase that catalyzes in vivo the transfer of the heptaprenyl moiety of heptaprenyl pyrophosphate (HepPP; 35 carbon atoms) to the C3 hydroxyl of sn-glycerol-1-phosphate (G1P), producing heptaprenylglyceryl phosphate (HepGP). This reaction is an ether-bond-formation step in the biosynthesis of archaea-type G1P-based membrane lipids found in Bacillales. To a much lesser extent, is also able to use geranylgeranyl diphosphate (GGPP; C20) as the prenyl donor. This Staphylococcus aureus (strain NCTC 8325 / PS 47) protein is Heptaprenylglyceryl phosphate synthase.